The primary structure comprises 322 residues: Protease HtpX homolog (322 aa).

2 helical membrane passes run Ile-19–Leu-39 and Phe-61–Phe-81. His-165 is a Zn(2+) binding site. Residue Glu-166 is part of the active site. His-169 serves as a coordination point for Zn(2+). 2 consecutive transmembrane segments (helical) span residues Val-175 to Ala-195 and Ile-216 to Met-236. Zn(2+) is bound at residue Glu-245.

It belongs to the peptidase M48B family. It depends on Zn(2+) as a cofactor.

It is found in the cell inner membrane. The sequence is that of Protease HtpX homolog from Bacteroides fragilis (strain YCH46).